The sequence spans 212 residues: Glutathione S-transferase hmp2 (212 aa).

One can recognise a GST N-terminal domain in the interval 1–80 (MVIKLYGSAM…YLARKYDSGT (80 aa)). Residues 51-52 (KV) and 64-65 (ES) each bind glutathione. One can recognise a GST C-terminal domain in the interval 88-212 (DHEAYGRFEQ…TWIKATAEAR (125 aa)).

This sequence belongs to the GST superfamily.

The enzyme catalyses RX + glutathione = an S-substituted glutathione + a halide anion + H(+). Its pathway is secondary metabolite biosynthesis. Its function is as follows. Glutathione S-transferase; part of the gene cluster that mediates the biosynthesis of hypothemycin, a resorcylic acid lactone (RAL) that irreversibly inhibits a subset of protein kinases with a conserved cysteine in the ATP binding site such as human ERK2. The first step is performed by both PKSs hmp3 and hmp8 and leads to the production of 7',8'-dehydrozearalenol (DHZ). The highly reducing PKS hpm8 synthesizes the reduced hexaketide (7S,11S,2E,8E)-7,11-dihydroxy-dodeca-2,8-dienoate, which is transferred downstream to the non-reducing PKS hpm3. Hpm3 then extends the reduced hexaketide to a nonaketide, after which regioselective cyclization and macrolactonization affords DHZ. The next step is the conversion of DHZ into aigialomycin C and is performed by the O-methyltransferase hmp5, the FAD-binding monooxygenase hmp7, and the cytochrome P450 monooxygenase hmp1. The wide substrate tolerance of the hmp5 and hmp7 implies that the reactions from DHZ to aigialomycin C can occur in any order. The steps from aigialomycin C to hypothemycin are less well established. The FAD-linked oxidoreductase hmp9 presumably catalyzes oxidation of the C-6' hydroxyl to a ketone. The timing of this oxidation is important, since the resulting enone functional group is a Michael acceptor that can react spontaneously with glutathione, an abundant metabolite in fungal cells. The glutathione S-transferase hmp2 catalyzes cis-trans isomerization of the 7',8' double bond with equilibrium favoring the trans isomer. The hpm6-encoded transporter might preferentially pump hypothemycin out of the cell relative to the trans isomer aigialomycin A. The cis-to-trans isomerization may be coupled with C-4' hydroxylation, since all known hypothemycin analogs containing the enone functional group also have hydroxyl groups at both C-4' and C-5'. This chain is Glutathione S-transferase hmp2, found in Hypomyces subiculosus (Nectria subiculosa).